The chain runs to 668 residues: Packaging protein UL32 homolog (668 aa).

The segment covering 1–10 (MNPSTHVSSN) has biased composition (polar residues). The interval 1–35 (MNPSTHVSSNGPTTPPHGPHTTFLPPTSPAPSTSS) is disordered. A compositionally biased stretch (low complexity) spans 19-35 (PHTTFLPPTSPAPSTSS). Zn(2+) is bound by residues C200, C203, H276, and C282. Residues 200-282 (CNLCAIISIC…FHLHFFINRC (83 aa)) are zinc finger 1. Basic and acidic residues-rich tracts occupy residues 392–401 (SEREDARMMM) and 410–419 (GEKGGDDPGR). The disordered stretch occupies residues 392–430 (SEREDARMMMEEEEDEEGGEKGGDDPGRHNGGGTSGGFS). C459, C462, H567, and C574 together coordinate Zn(2+). A zinc finger 2 region spans residues 459-574 (CLLCELMACS…YKHFFCDPQC (116 aa)).

The protein belongs to the herpesviridae UL32 protein family.

It is found in the host cytoplasm. Its subcellular location is the host nucleus. In terms of biological role, plays a role in efficient localization of neo-synthesized capsids to nuclear replication compartments, thereby controlling cleavage and packaging of virus genomic DNA. The polypeptide is Packaging protein UL32 homolog (UL52) (Homo sapiens (Human)).